Consider the following 155-residue polypeptide: Pathogenesis-related protein STH-21 (155 aa).

Belongs to the BetVI family.

In Solanum tuberosum (Potato), this protein is Pathogenesis-related protein STH-21 (STH-21).